The primary structure comprises 363 residues: MISGGGTGGHIYPALALIERLKQRGLLDAVLYVGTERGLESKIVPDQGIDFKTLEIQGFKRSMNLNGIKTNLKTIELFMSSIKSAKKMIKEFKPDVVIGTGGYVSGSLLYAASRLKVPTIIHEQNSAAGVTNKFLARFVDKVAISFESVSDQFPMHKVVLTGNPRAQQVAGMVPNERLSEFGLKTDSPTVMIFGGSRGAPSINKAFIDAVPLLNERDYQVLFVSGQVHYENVQAALANTTLNSNLAFVPYISNMPEVLPDLKAIVGRAGATSLAEITALGIPSILIPSPYVTNDHQTKNAQSLVKEDAAMLIPEPELTGASLVKALDTLFETPEKQHAMAKAAKKSGIRDASDRIIEVIETII.

UDP-N-acetyl-alpha-D-glucosamine is bound by residues Thr7–Gly9, Asn125, Ser196, Ile251, and Gln296.

The protein belongs to the glycosyltransferase 28 family. MurG subfamily.

It is found in the cell membrane. It carries out the reaction Mur2Ac(oyl-L-Ala-gamma-D-Glu-L-Lys-D-Ala-D-Ala)-di-trans,octa-cis-undecaprenyl diphosphate + UDP-N-acetyl-alpha-D-glucosamine = beta-D-GlcNAc-(1-&gt;4)-Mur2Ac(oyl-L-Ala-gamma-D-Glu-L-Lys-D-Ala-D-Ala)-di-trans,octa-cis-undecaprenyl diphosphate + UDP + H(+). Its pathway is cell wall biogenesis; peptidoglycan biosynthesis. Its function is as follows. Cell wall formation. Catalyzes the transfer of a GlcNAc subunit on undecaprenyl-pyrophosphoryl-MurNAc-pentapeptide (lipid intermediate I) to form undecaprenyl-pyrophosphoryl-MurNAc-(pentapeptide)GlcNAc (lipid intermediate II). The polypeptide is UDP-N-acetylglucosamine--N-acetylmuramyl-(pentapeptide) pyrophosphoryl-undecaprenol N-acetylglucosamine transferase (Latilactobacillus sakei subsp. sakei (strain 23K) (Lactobacillus sakei subsp. sakei)).